The following is a 233-amino-acid chain: Beta-fibrinogenase brevinase (233 aa).

Residues 1–224 (VIGGDECNIN…YIDWIQSIIA (224 aa)) form the Peptidase S1 domain. Intrachain disulfides connect Cys-7/Cys-138, Cys-25/Cys-41, Cys-73/Cys-231, Cys-117/Cys-185, Cys-149/Cys-164, and Cys-175/Cys-200. The active-site Charge relay system is the His-40. A glycan (N-linked (GlcNAc...) asparagine) is linked at Asn-54. Residue Asp-85 is the Charge relay system of the active site. Asn-129 is a glycosylation site (N-linked (GlcNAc...) asparagine). Residues 176 to 178 (RGD) carry the Cell attachment site motif. The active-site Charge relay system is the Ser-179. Residue Asn-226 is glycosylated (N-linked (GlcNAc...) asparagine).

It belongs to the peptidase S1 family. Snake venom subfamily. In terms of assembly, heterodimer of the brevinase A chain and the brevinase B chain. Expressed by the venom gland.

It is found in the secreted. Its activity is regulated as follows. The fibrinolytic activity is completely inhibited by PMSF, diisopropylfluorophosphate (DFP), pefabloc, dithiothreitol (DTT) and Zn(2+), but not by Pepstatin A, E64, iodoacetate, chymostatin, tosyl-Lphenylalanine chloromethyl ketone (TPCK), soybean trypsin inhibitor (SBTI), phosphoramidon, Ca(2+), Co(2+), Cu(2+), Fe(2+), Mg(2+), Mn(2+), K(+), and Na(+). Functionally, snake venom serine protease that has fibrinogenolytic activities. Preferentially cleaves the Bbeta-chain (FGB) and more slowly the Aa-chain (FGA) of fibrinogen, but does not affect the gamma-chain. Also has fibrinolytic activity. May play a role in antithrombotic reaction as well as thrombolytic reaction. The polypeptide is Beta-fibrinogenase brevinase (Gloydius blomhoffii (Mamushi)).